Reading from the N-terminus, the 787-residue chain is Integrin beta-6 (787 aa).

Residues methionine 1–glycine 21 form the signal peptide. The region spanning glycine 22 to glutamine 71 is the PSI domain. Residues glycine 22–proline 708 are Extracellular-facing. 19 cysteine pairs are disulfide-bonded: cysteine 23-cysteine 41, cysteine 31-cysteine 454, cysteine 34-cysteine 59, cysteine 44-cysteine 70, cysteine 197-cysteine 204, cysteine 252-cysteine 293, cysteine 394-cysteine 406, cysteine 426-cysteine 452, cysteine 456-cysteine 476, cysteine 467-cysteine 479, cysteine 481-cysteine 490, cysteine 492-cysteine 519, cysteine 502-cysteine 517, cysteine 511-cysteine 522, cysteine 524-cysteine 537, cysteine 539-cysteine 560, cysteine 544-cysteine 558, cysteine 552-cysteine 563, and cysteine 565-cysteine 574. N-linked (GlcNAc...) asparagine glycans are attached at residues asparagine 48 and asparagine 97. A VWFA domain is found at tyrosine 131–leucine 371. Mg(2+) contacts are provided by aspartate 140, serine 142, and serine 144. Ca(2+) contacts are provided by serine 144, aspartate 147, aspartate 148, and glutamate 179. Ca(2+)-binding residues include asparagine 235, aspartate 237, proline 239, and glutamate 240. Position 240 (glutamate 240) interacts with Mg(2+). A glycan (N-linked (GlcNAc...) asparagine) is linked at asparagine 260. Residues aspartate 271 and lysine 355 each coordinate Ca(2+). Asparagine 387 carries N-linked (GlcNAc...) asparagine glycosylation. The N-linked (GlcNAc...) asparagine glycan is linked to asparagine 418. 4 consecutive I-EGF domains span residues cysteine 456–glutamate 491, cysteine 492–glutamine 538, cysteine 539–asparagine 575, and cysteine 576–glutamate 615. N-linked (GlcNAc...) asparagine glycans are attached at residues asparagine 463 and asparagine 471. Asparagine 541 carries an N-linked (GlcNAc...) asparagine glycan. N-linked (GlcNAc...) asparagine glycosylation is present at asparagine 575. 9 cysteine pairs are disulfide-bonded: cysteine 576/cysteine 599, cysteine 583/cysteine 597, cysteine 591/cysteine 602, cysteine 604/cysteine 614, cysteine 617/cysteine 620, cysteine 624/cysteine 669, cysteine 630/cysteine 649, cysteine 633/cysteine 645, and cysteine 677/cysteine 701. N-linked (GlcNAc...) asparagine glycosylation is present at asparagine 695. A helical membrane pass occupies residues methionine 709 to tryptophan 729. Residues lysine 730–threonine 757 form an interaction with HAX1 region. Over lysine 730–glycine 787 the chain is Cytoplasmic.

This sequence belongs to the integrin beta chain family. Heterodimer of an alpha and a beta subunit. Interacts with FLNB. Interacts with HAX1. ITGAV:ITGB6 interacts with FBN1. ITGAV:ITGB6 interacts with TGFB1.

The protein resides in the cell membrane. It is found in the cell junction. It localises to the focal adhesion. Integrin alpha-V:beta-6 (ITGAV:ITGB6) is a receptor for fibronectin and cytotactin. It recognizes the sequence R-G-D in its ligands. ITGAV:ITGB6 acts as a receptor for fibrillin-1 (FBN1) and mediates R-G-D-dependent cell adhesion to FBN1. Integrin alpha-V:beta-6 (ITGAV:ITGB6) mediates R-G-D-dependent release of transforming growth factor beta-1 (TGF-beta-1) from regulatory Latency-associated peptide (LAP), thereby playing a key role in TGF-beta-1 activation. In Rattus norvegicus (Rat), this protein is Integrin beta-6 (Itgb6).